Here is a 291-residue protein sequence, read N- to C-terminus: Energy-coupling factor transporter ATP-binding protein EcfA2 (291 aa).

Residues 3-246 (ITFKDVSYTY…PEWLTSKQLG (244 aa)) enclose the ABC transporter domain. 40 to 47 (GHTGSGKS) contacts ATP.

This sequence belongs to the ABC transporter superfamily. Energy-coupling factor EcfA family. In terms of assembly, forms a stable energy-coupling factor (ECF) transporter complex composed of 2 membrane-embedded substrate-binding proteins (S component), 2 ATP-binding proteins (A component) and 2 transmembrane proteins (T component).

It is found in the cell membrane. In terms of biological role, ATP-binding (A) component of a common energy-coupling factor (ECF) ABC-transporter complex. Unlike classic ABC transporters this ECF transporter provides the energy necessary to transport a number of different substrates. The sequence is that of Energy-coupling factor transporter ATP-binding protein EcfA2 from Latilactobacillus sakei subsp. sakei (strain 23K) (Lactobacillus sakei subsp. sakei).